We begin with the raw amino-acid sequence, 450 residues long: Molybdate-anion transporter (450 aa).

The next 12 membrane-spanning stretches (helical) occupy residues 1–21 (MLVT…GLEL), 38–58 (FLQF…ADWL), 79–99 (ILYV…SSLV), 128–148 (FVLL…FSAF), 167–187 (IPAT…AAGV), 191–211 (AVAS…IPLL), 249–269 (VLLL…FVFL), 278–298 (GAPL…GSSL), 311–331 (PMHL…MLTF), 344–364 (FIAF…MSFL), 376–396 (GVLN…LLVL), and 409–429 (FSIC…LFTV).

This sequence belongs to the major facilitator superfamily.

It is found in the cell membrane. Its function is as follows. Mediates high-affinity intracellular uptake of the rare oligo-element molybdenum. This chain is Molybdate-anion transporter (Mfsd5), found in Mus musculus (Mouse).